We begin with the raw amino-acid sequence, 139 residues long: D-ribose pyranase (139 aa).

The active-site Proton donor is histidine 20. Residues aspartate 28, histidine 106, and 128–130 each bind substrate; that span reads YAN.

It belongs to the RbsD / FucU family. RbsD subfamily. As to quaternary structure, homodecamer.

The protein resides in the cytoplasm. The catalysed reaction is beta-D-ribopyranose = beta-D-ribofuranose. Its pathway is carbohydrate metabolism; D-ribose degradation; D-ribose 5-phosphate from beta-D-ribopyranose: step 1/2. Its function is as follows. Catalyzes the interconversion of beta-pyran and beta-furan forms of D-ribose. The sequence is that of D-ribose pyranase from Enterobacter sp. (strain 638).